Reading from the N-terminus, the 382-residue chain is S-adenosylmethionine decarboxylase proenzyme (382 aa).

F32 is a binding site for substrate. Active-site residues include E33 and E36. L87 is a binding site for substrate. Catalysis depends on S90, which acts as the Schiff-base intermediate with substrate; via pyruvic acid. At S90 the chain carries Pyruvic acid (Ser); by autocatalysis. C104 functions as the Proton donor; for catalytic activity in the catalytic mechanism. A substrate-binding site is contributed by F248. Residues S254 and H267 each act as proton acceptor; for processing activity in the active site. A substrate-binding site is contributed by E271.

Belongs to the eukaryotic AdoMetDC family. Heterotetramer of two alpha and two beta chains. The cofactor is pyruvate. Is synthesized initially as an inactive proenzyme. Formation of the active enzyme involves a self-maturation process in which the active site pyruvoyl group is generated from an internal serine residue via an autocatalytic post-translational modification. Two non-identical subunits are generated from the proenzyme in this reaction, and the pyruvate is formed at the N-terminus of the alpha chain, which is derived from the carboxyl end of the proenzyme. The post-translation cleavage follows an unusual pathway, termed non-hydrolytic serinolysis, in which the side chain hydroxyl group of the serine supplies its oxygen atom to form the C-terminus of the beta chain, while the remainder of the serine residue undergoes an oxidative deamination to produce ammonia and the pyruvoyl group blocking the N-terminus of the alpha chain.

It catalyses the reaction S-adenosyl-L-methionine + H(+) = S-adenosyl 3-(methylsulfanyl)propylamine + CO2. It participates in amine and polyamine biosynthesis; S-adenosylmethioninamine biosynthesis; S-adenosylmethioninamine from S-adenosyl-L-methionine: step 1/1. This is S-adenosylmethionine decarboxylase proenzyme from Leishmania donovani.